Consider the following 139-residue polypeptide: MTYELKMPILGFDATKIELEKIDETFSKIRGLDGKQPFEITLINPFSLCDYAFTIPTADERLLDLDESRGDKVEVYCVVVLQKPIENSVVNLMAPFVFNPANACALQVTTLPVAEYPQFSKVLPLKEFLSKEILETLNR.

The protein belongs to the FliW family. As to quaternary structure, interacts with translational regulator CsrA and flagellin(s).

It is found in the cytoplasm. Functionally, acts as an anti-CsrA protein, binds CsrA and prevents it from repressing translation of its target genes, one of which is flagellin. Binds to flagellin and participates in the assembly of the flagellum. This chain is Flagellar assembly factor FliW 2, found in Helicobacter hepaticus (strain ATCC 51449 / 3B1).